The chain runs to 564 residues: Beta-N-acetylglucosaminidase/beta-glucosidase (564 aa).

Asp-283 serves as the catalytic Nucleophile.

This sequence belongs to the glycosyl hydrolase 3 family.

The catalysed reaction is Hydrolysis of terminal non-reducing N-acetyl-D-hexosamine residues in N-acetyl-beta-D-hexosaminides.. It carries out the reaction Hydrolysis of terminal, non-reducing beta-D-glucosyl residues with release of beta-D-glucose.. Catalyzes the cleavage of beta-N-acetyl-D-glucosaminides and beta-D-glucosides. Might be involved in the degradation of glucuronic acid-containing glycosaminoglycans such as hyaluronic acid. The sequence is that of Beta-N-acetylglucosaminidase/beta-glucosidase (nag3) from Cellulomonas fimi.